Reading from the N-terminus, the 636-residue chain is Beta-galactosidase-1-like protein 2 (636 aa).

The signal sequence occupies residues Met1–Trp32. Glu201 functions as the Proton donor in the catalytic mechanism. The active-site Nucleophile is Glu277.

The protein belongs to the glycosyl hydrolase 35 family.

It localises to the secreted. The polypeptide is Beta-galactosidase-1-like protein 2 (GLB1L2) (Homo sapiens (Human)).